Here is a 717-residue protein sequence, read N- to C-terminus: MASSSDSEDDSFMAVDQEETVLEGTMEQDEEPHPVLEAEETRHNRSMSELPEEVLEYILSFLSPYQEHKTAALVCKQWYRLIKGVAHQCYHGFVKAVQEGNIQWESRTYPYPGTPITQRFSHSACYYDANQSMYVFGGCTQSSCNAAFNDLWRLDLNSKEWIRPLASGSYPSPKAGATLVVYKDLLVLFGGWTRPSPYPLHQPERFFDEIHTYSPSKNWWNCIVTTHGPPPMAGHSSCVIDDKMIVFGGSLGSRQMSNDVWVLDLEQWAWSKPNISGPSPHPRGGQSQIVIDDATILILGGCGGPNALFKDAWLLHMHSGPWAWQPLKVENEEHGAPELWCHPACRVGQCVVVFSQAPSGRAPLSPSLNSRPSPISATPPALVPETREYRSQSPVRSMDEAPCVNGRWGTLRPRAQRQTPSGSREGSLSPARGDGSPILNGGSLSPGTAAVGGSSLDSPVQAISPSTPSAAEGYDLKIGLSLAPRRGSLPDQKDLRLGSVDLNWDLKPASSSNPMDGMDNRTVGGSMRHPPEQTNGVHTPPHVASALAGAVSPGALRRSLEAIKAMSSKGPSASAALSPPLGSSPGSPGSQSLSSGETVPIPRPGPAQGDGHSLPPIARRLGRHPPQSLNVGKPLYQSMNCKPMQMYVLDIKDTKEKGRVKWKVFNSSSVVGPPETSLHTVVQGRGELIIFGGLMDKKQNVKYYPKTNALYFVRAKR.

A compositionally biased stretch (acidic residues) spans 1–30; sequence MASSSDSEDDSFMAVDQEETVLEGTMEQDE. Residues 1 to 47 form a disordered region; the sequence is MASSSDSEDDSFMAVDQEETVLEGTMEQDEEPHPVLEAEETRHNRSM. Over residues 31 to 43 the composition is skewed to basic and acidic residues; that stretch reads EPHPVLEAEETRH. The region spanning 44–93 is the F-box domain; that stretch reads NRSMSELPEEVLEYILSFLSPYQEHKTAALVCKQWYRLIKGVAHQCYHGF. Kelch repeat units lie at residues 132–184, 186–242, 244–293, and 295–342; these read SMYV…VYKD, LVLF…VIDD, MIVF…VIDD, and TILI…LWCH. 2 disordered regions span residues 361–472 and 508–539; these read RAPL…SAAE and PASS…GVHT. The span at 363 to 376 shows a compositional bias: low complexity; sequence PLSPSLNSRPSPIS. A phosphoserine mark is found at S365 and S373. T378 bears the Phosphothreonine mark. 2 stretches are compositionally biased toward polar residues: residues 416 to 426 and 455 to 469; these read QRQTPSGSREG and SLDS…STPS. Residue S552 is modified to Phosphoserine. Positions 570–596 are enriched in low complexity; the sequence is GPSASAALSPPLGSSPGSPGSQSLSSG. The tract at residues 570–635 is disordered; sequence GPSASAALSP…PQSLNVGKPL (66 aa).

In terms of assembly, component of some SCF complex, composed of CUL1, SKP1, RBX1 and FBXO42. Interacts (via the kelch domain) with p53/TP53; interaction is direct.

Functionally, substrate-recognition component of some SCF (SKP1-CUL1-F-box protein)-type E3 ubiquitin ligase complex. Specifically recognizes p53/TP53, promoting its ubiquitination and degradation. The protein is F-box only protein 42 (FBXO42) of Pongo abelii (Sumatran orangutan).